A 397-amino-acid chain; its full sequence is MRSLSLAWLLGGITLLAASASCNRTVNAPGPNSKGRSLIGRLDTPPPITGKGAPVEPGFSVDEFSASVLTGKLTTVFLPVIYIIVFVIGLPSNGMALWVFFFRTKKKHPAVIYMANLALADLLSVIWFPLKISYHLHGNDWTYGDALCKVLIGFFYGNMYCSILFMTCLSVQRYWVIVNPMGHSRKRANIAVGVSLAIWLLIFLVTIPLYVMRQTIYIPALNITTCHDVLPEEVLVGDMFSYFLSLAIGVFLFPALLTASAYVLMIKTLRSSAMDEHSEKKRRRAIRLIITVLSMYFICFAPSNVLLVVHYFLIKSQRQSHVYALYLVALCLSTLNSCIDPFVYYFVSKDFRDQARNALLCRSVRTVKRMQISLTSNKFSRKSSSYSSSSTSVKTSY.

Positions 1-25 are cleaved as a signal peptide; sequence MRSLSLAWLLGGITLLAASASCNRT. Asn-23 carries an N-linked (GlcNAc...) asparagine glycan. The propeptide at 26-36 is removed for receptor activation; it reads VNAPGPNSKGR. Over 37 to 71 the chain is Extracellular; that stretch reads SLIGRLDTPPPITGKGAPVEPGFSVDEFSASVLTG. A helical membrane pass occupies residues 72–101; it reads KLTTVFLPVIYIIVFVIGLPSNGMALWVFF. Topologically, residues 102–108 are cytoplasmic; it reads FRTKKKH. Residues 109–137 traverse the membrane as a helical segment; the sequence is PAVIYMANLALADLLSVIWFPLKISYHLH. The Extracellular segment spans residues 138 to 149; that stretch reads GNDWTYGDALCK. An intrachain disulfide couples Cys-148 to Cys-226. Residues 150–177 form a helical membrane-spanning segment; it reads VLIGFFYGNMYCSILFMTCLSVQRYWVI. The Cytoplasmic portion of the chain corresponds to 178 to 183; that stretch reads VNPMGH. A helical transmembrane segment spans residues 184–211; it reads SRKRANIAVGVSLAIWLLIFLVTIPLYV. Over 212–235 the chain is Extracellular; sequence MRQTIYIPALNITTCHDVLPEEVL. N-linked (GlcNAc...) asparagine glycosylation is present at Asn-222. The chain crosses the membrane as a helical span at residues 236–269; it reads VGDMFSYFLSLAIGVFLFPALLTASAYVLMIKTL. Topologically, residues 270 to 277 are cytoplasmic; the sequence is RSSAMDEH. A helical membrane pass occupies residues 278–317; it reads SEKKRRRAIRLIITVLSMYFICFAPSNVLLVVHYFLIKSQ. Residues 318 to 323 lie on the Extracellular side of the membrane; it reads RQSHVY. The helical transmembrane segment at 324–347 threads the bilayer; the sequence is ALYLVALCLSTLNSCIDPFVYYFV. Residues 348–397 lie on the Cytoplasmic side of the membrane; sequence SKDFRDQARNALLCRSVRTVKRMQISLTSNKFSRKSSSYSSSSTSVKTSY. The S-palmitoyl cysteine moiety is linked to residue Cys-361.

The protein belongs to the G-protein coupled receptor 1 family. As to quaternary structure, interacts with TLR4, COPS5 and TMED2. Interacts with GNAQ, GNA11, GNA12, GNA13 and GNA14. Post-translationally, a proteolytic cleavage generates a new N-terminus that functions as a tethered ligand. Activating serine proteases include trypsin, mast cell tryptase, coagulation factors VII and Xa, myeloblastin/PRTN3 and membrane-type serine protease 1/ST14. Proposed subsequent cleavage by serine proteases is leading to receptor deactivation and include neutrophil elastase and cathepsin G. At least in part, implicated proteases are also shown to activate the receptor; the glycosylation status of the receptor is thought to contribute to the difference. In terms of processing, N-glycosylated and sialylated. Multiple phosphorylated on serine and threonine residues in the cytoplasmic region upon receptor activation; required for receptor desensitization and recruitment of beta-arrestin. Post-translationally, monoubiquitinated by Cbl at the plasma membrane and in early endosomes; not required for receptor endocytosis but for translocation to late endosomes or lysosomes. Deubiquitination involves Stambp and Usp8; required for lysosomal trafficking and receptor degradation.

It is found in the cell membrane. Receptor for trypsin and trypsin-like enzymes coupled to G proteins. Its function is mediated through the activation of several signaling pathways including phospholipase C (PLC), intracellular calcium, mitogen-activated protein kinase (MAPK), I-kappaB kinase/NF-kappaB and Rho. Can also be transactivated by cleaved F2R/PAR1. Involved in modulation of inflammatory responses and regulation of innate and adaptive immunity, and acts as a sensor for proteolytic enzymes generated during infection. Generally is promoting inflammation. Can signal synergistically with TLR4 and probably TLR2 in inflammatory responses and modulates Tlr3 signaling. Has a protective role in establishing the endothelial barrier; the activity involves coagulation factor X. Regulates endothelial cell barrier integrity during neutrophil extravasation, probably following proteolytic cleavage by PRTN3. Proposed to have a bronchoprotective role in airway epithelium, but also shown to compromise the airway epithelial barrier by interrupting E-cadherin adhesion. Involved in the regulation of vascular tone; activation results in hypotension presumably mediated by vasodilation. Associates with a subset of G proteins alpha subunits such as GNAQ, GNA11, GNA14, GNA12 and GNA13, but probably not with G(o)-alpha, G(i) subunit alpha-1 and G(i) subunit alpha-2. Believed to be a class B receptor which internalizes as a complex with arrestin and traffic with it to endosomal vesicles, presumably as desensitized receptor, for extended periods of time. Mediates inhibition of TNF-alpha stimulated JNK phosphorylation via coupling to G GNAQ and GNA11; the function involves dissociation of RIPK1 and Tradd from TNFR1. Mediates phosphorylation of nuclear factor NF-kappa-B RELA subunit at 'Ser-536'; the function involves Ikbkb and is predominantly independent of G proteins. Involved in cellular migration. Involved in cytoskeletal rearrangement and chemotaxis through beta-arrestin-promoted scaffolds; the function is independent of GNAQ and GNA11 and involves promotion of cofilin dephosphorylation and actin filament severing. Induces redistribution of COPS5 from the plasma membrane to the cytosol and activation of the JNK cascade is mediated by Cops5. Involved in the recruitment of leukocytes to the sites of inflammation and is the major PAR receptor capable of modulating eosinophil function such as pro-inflammatory cytokine secretion, superoxide production and degranulation. During inflammation promotes dendritic cell maturation, trafficking to the lymph nodes and subsequent T-cell activation. Involved in antimicrobial response of innate immune cells; activation enhances phagocytosis of Gram-positive and killing of Gram-negative bacteria. Acts synergistically with interferon-gamma in enhancing antiviral responses. Probably mediates activation of pro-inflammatory and pro-fibrotic responses in fibroblasts, triggered by coagulation factor Xa (F10). Probably mediates activation of barrier protective signaling responses in endothelial cells, triggered by coagulation factor Xa (F10). This chain is Proteinase-activated receptor 2 (F2rl1), found in Rattus norvegicus (Rat).